The chain runs to 319 residues: DNA-directed RNA polymerases II, IV and V subunit 3 (319 aa).

Met-1 bears the N-acetylmethionine mark.

The protein belongs to the archaeal Rpo3/eukaryotic RPB3 RNA polymerase subunit family. In terms of assembly, component of the RNA polymerase II complex consisting of at least 12 subunits. Interacts with SHH1, CLSY1, NRPB11 and NRPD1. Interacts with IYO.

It is found in the nucleus. DNA-dependent RNA polymerase catalyzes the transcription of DNA into RNA using the four ribonucleoside triphosphates as substrates. Component of RNA polymerase II which synthesizes mRNA precursors and many functional non-coding RNAs. Pol II is the central component of the basal RNA polymerase II transcription machinery. It is composed of mobile elements that move relative to each other. NRPB3 is part of the core element with the central large cleft and the clamp element that moves to open and close the cleft. Component of RNA polymerases IV and V which mediate short-interfering RNAs (siRNA) accumulation and subsequent RNA-directed DNA methylation-dependent (RdDM) transcriptional gene silencing (TGS) of endogenous repeated sequences, including transposable elements. The chain is DNA-directed RNA polymerases II, IV and V subunit 3 (NRPB3) from Arabidopsis thaliana (Mouse-ear cress).